Consider the following 433-residue polypeptide: MSSSERVPCDFCGERTAVLFCRADTAKLCLPCDQQVHTANLLSRKHVRSQICDNCGNEPVSVRCFTDNLILCQECDWDVHGSCSVSDAHVRSAVEGFSGCPSALELAALWGLDLEQGRKDEENQVPMMAMMMDNFGMQLDSWVLGSNELIVPSDTTFKKRGSCGSSCGRYKQVLCKQLEELLKSGVVGGDGDDGDRDRDCDREGACDGDGDGEAGEGLMVPEMSERLKWSRDVEEINGGGGGGVNQQWNATTTNPSGGQSSQIWDFNLGQSRGPEDTSRVEAAYVGKGAASSFTINNFVDHMNETCSTNVKGVKEIKKDDYKRSTSGQVQPTKSESNNRPITFGSEKGSNSSSDLHFTEHIAGTSCKTTRLVATKADLERLAQNRGDAMQRYKEKRKTRRYDKTIRYESRKARADTRLRVRGRFVKASEAPYP.

The Zn(2+) site is built by cysteine 9, cysteine 12, cysteine 32, histidine 37, cysteine 52, cysteine 55, cysteine 75, and histidine 80. The segment at 9-51 (CDFCGERTAVLFCRADTAKLCLPCDQQVHTANLLSRKHVRSQI) adopts a B box-type 1; atypical zinc-finger fold. The B box-type 2; atypical zinc-finger motif lies at 52–94 (CDNCGNEPVSVRCFTDNLILCQECDWDVHGSCSVSDAHVRSAV). Residues 319 to 353 (DDYKRSTSGQVQPTKSESNNRPITFGSEKGSNSSS) form a disordered region. Positions 324 to 340 (STSGQVQPTKSESNNRP) are enriched in polar residues. The stretch at 374–398 (TKADLERLAQNRGDAMQRYKEKRKT) forms a coiled coil. The region spanning 385-427 (RGDAMQRYKEKRKTRRYDKTIRYESRKARADTRLRVRGRFVKA) is the CCT domain.

Belongs to the CONSTANS family.

It is found in the nucleus. This chain is Zinc finger protein CONSTANS-LIKE 15 (COL15), found in Arabidopsis thaliana (Mouse-ear cress).